Here is a 190-residue protein sequence, read N- to C-terminus: Recombination protein RecR (190 aa).

The segment at 58–73 (CEQCGALSENELCEIC) adopts a C4-type zinc-finger fold. The Toprim domain maps to 81-167 (NILCIVESPK…TFSKIAQGIP (87 aa)).

It belongs to the RecR family.

May play a role in DNA repair. It seems to be involved in an RecBC-independent recombinational process of DNA repair. It may act with RecF and RecO. This Campylobacter jejuni subsp. doylei (strain ATCC BAA-1458 / RM4099 / 269.97) protein is Recombination protein RecR.